The chain runs to 421 residues: Serine hydroxymethyltransferase (421 aa).

(6S)-5,6,7,8-tetrahydrofolate-binding positions include leucine 121 and 125–127 (GHL). Lysine 230 is subject to N6-(pyridoxal phosphate)lysine. Residue 355–357 (SPF) coordinates (6S)-5,6,7,8-tetrahydrofolate.

Belongs to the SHMT family. Homodimer. It depends on pyridoxal 5'-phosphate as a cofactor.

It is found in the cytoplasm. It carries out the reaction (6R)-5,10-methylene-5,6,7,8-tetrahydrofolate + glycine + H2O = (6S)-5,6,7,8-tetrahydrofolate + L-serine. Its pathway is one-carbon metabolism; tetrahydrofolate interconversion. The protein operates within amino-acid biosynthesis; glycine biosynthesis; glycine from L-serine: step 1/1. Catalyzes the reversible interconversion of serine and glycine with tetrahydrofolate (THF) serving as the one-carbon carrier. This reaction serves as the major source of one-carbon groups required for the biosynthesis of purines, thymidylate, methionine, and other important biomolecules. Also exhibits THF-independent aldolase activity toward beta-hydroxyamino acids, producing glycine and aldehydes, via a retro-aldol mechanism. This is Serine hydroxymethyltransferase from Psychromonas ingrahamii (strain DSM 17664 / CCUG 51855 / 37).